The chain runs to 72 residues: Protein kish-A (72 aa).

A signal peptide spans 1–26 (MSAIFNFQSLLTVILLLICTCAYIRS). Over 27–53 (LAPSLLDKNKSGLLGIFWKCARIGERK) the chain is Extracellular. The N-linked (GlcNAc...) asparagine glycan is linked to Asn-35. A helical transmembrane segment spans residues 54–71 (SPYVAVCCVVMAFSILFM). Residue Gln-72 is a topological domain, cytoplasmic.

It belongs to the KISH family.

It is found in the golgi apparatus membrane. Its function is as follows. Involved in the early part of the secretory pathway. The sequence is that of Protein kish-A (TMEM167A) from Taeniopygia guttata (Zebra finch).